The chain runs to 329 residues: Isoaspartyl peptidase/L-asparaginase (329 aa).

Thr173 (nucleophile) is an active-site residue. Substrate is bound by residues Arg201–Asp204 and Thr222–Gly225.

The protein belongs to the Ntn-hydrolase family. Heterotetramer of two alpha and two beta chains arranged as a dimer of alpha/beta heterodimers. Cleaved into an alpha and beta chain by autocatalysis; this activates the enzyme. The N-terminal residue of the beta subunit is responsible for the nucleophile hydrolase activity.

It carries out the reaction Cleavage of a beta-linked Asp residue from the N-terminus of a polypeptide.. In terms of biological role, degrades proteins damaged by L-isoaspartyl residue formation (also known as beta-Asp residues). Probably performs the final step in the degradation of the reserve polymer cyanophycin (depolymerizes the building block L-beta-Asp-Arg). Also has L-asparaginase activity. The protein is Isoaspartyl peptidase/L-asparaginase of Synechocystis sp. (strain ATCC 27184 / PCC 6803 / Kazusa).